The chain runs to 204 residues: Recombination protein RecR (204 aa).

The C4-type zinc finger occupies 59–74 (CTRCNTFTELEICGTC). Positions 82-181 (TLLCVVETPA…KVSRLARGVP (100 aa)) constitute a Toprim domain.

Belongs to the RecR family.

In terms of biological role, may play a role in DNA repair. It seems to be involved in an RecBC-independent recombinational process of DNA repair. It may act with RecF and RecO. The polypeptide is Recombination protein RecR (Cupriavidus metallidurans (strain ATCC 43123 / DSM 2839 / NBRC 102507 / CH34) (Ralstonia metallidurans)).